Here is a 459-residue protein sequence, read N- to C-terminus: Glycosyl hydrolase family 109 protein (459 aa).

A signal peptide (tat-type signal) is located at residues Met-1 to Ala-31. Residues Glu-64–Arg-65, Asp-86, Trp-135–His-138, Glu-155–Val-156, and Asn-184 each bind NAD(+). Residues Tyr-213, Arg-232, Tyr-244–His-247, and Tyr-326 each bind substrate. Residue Tyr-244 participates in NAD(+) binding.

It belongs to the Gfo/Idh/MocA family. Glycosyl hydrolase 109 subfamily. It depends on NAD(+) as a cofactor. In terms of processing, predicted to be exported by the Tat system. The position of the signal peptide cleavage has not been experimentally proven.

Its function is as follows. Glycosidase. The polypeptide is Glycosyl hydrolase family 109 protein (Shewanella putrefaciens (strain CN-32 / ATCC BAA-453)).